A 135-amino-acid chain; its full sequence is Galectin-1 (135 aa).

An N-acetylalanine modification is found at A2. The Galectin domain occupies 4–135; it reads GLVASNLNLK…DFKIKCVAFD (132 aa). K13 and K29 each carry N6-acetyllysine. S30 is modified (phosphoserine). A beta-D-galactoside is bound by residues 45-49, H53, N62, and 69-72; these read HFNPR and WGAE. The residue at position 108 (K108) is an N6-acetyllysine; alternate. Residue K108 is modified to N6-succinyllysine; alternate. At K128 the chain carries N6-acetyllysine.

Homodimer. Binds LGALS3BP. Interacts with CD2, CD3, CD4, CD6, CD7, CD43, ALCAM and CD45. Interacts with laminin (via poly-N-acetyllactosamine). Interacts with SUSD2. Interacts with cargo receptor TMED10; the interaction mediates the translocation from the cytoplasm into the ERGIC (endoplasmic reticulum-Golgi intermediate compartment) and thereby secretion. The N-terminus is blocked.

It localises to the secreted. The protein resides in the extracellular space. Its subcellular location is the extracellular matrix. The protein localises to the cytoplasm. In terms of biological role, lectin that binds beta-galactoside and a wide array of complex carbohydrates. Plays a role in regulating apoptosis, cell proliferation and cell differentiation. Inhibits CD45 protein phosphatase activity and therefore the dephosphorylation of Lyn kinase. Strong inducer of T-cell apoptosis. This chain is Galectin-1, found in Bubalus bubalis (Domestic water buffalo).